The sequence spans 108 residues: Phosphoribosyl-ATP pyrophosphatase (108 aa).

This sequence belongs to the PRA-PH family.

The protein localises to the cytoplasm. It carries out the reaction 1-(5-phospho-beta-D-ribosyl)-ATP + H2O = 1-(5-phospho-beta-D-ribosyl)-5'-AMP + diphosphate + H(+). The protein operates within amino-acid biosynthesis; L-histidine biosynthesis; L-histidine from 5-phospho-alpha-D-ribose 1-diphosphate: step 2/9. The protein is Phosphoribosyl-ATP pyrophosphatase of Chromobacterium violaceum (strain ATCC 12472 / DSM 30191 / JCM 1249 / CCUG 213 / NBRC 12614 / NCIMB 9131 / NCTC 9757 / MK).